The following is a 253-amino-acid chain: DNA repair protein RecO (253 aa).

Belongs to the RecO family.

Functionally, involved in DNA repair and RecF pathway recombination. This is DNA repair protein RecO from Dehalococcoides mccartyi (strain ATCC BAA-2100 / JCM 16839 / KCTC 5957 / BAV1).